We begin with the raw amino-acid sequence, 450 residues long: Phosphoglucosamine mutase (450 aa).

Ser-102 (phosphoserine intermediate) is an active-site residue. Residues Ser-102, Asp-242, Asp-244, and Asp-246 each contribute to the Mg(2+) site. The residue at position 102 (Ser-102) is a Phosphoserine.

This sequence belongs to the phosphohexose mutase family. Mg(2+) is required as a cofactor. Post-translationally, activated by phosphorylation.

It carries out the reaction alpha-D-glucosamine 1-phosphate = D-glucosamine 6-phosphate. Functionally, catalyzes the conversion of glucosamine-6-phosphate to glucosamine-1-phosphate. The chain is Phosphoglucosamine mutase from Lachnospira eligens (strain ATCC 27750 / DSM 3376 / VPI C15-48 / C15-B4) (Eubacterium eligens).